The chain runs to 194 residues: 5'-deoxynucleotidase VS_2195 (194 aa).

Residues 18-19 (RW) and His33 each bind substrate. In terms of domain architecture, HD spans 30 to 142 (ISEHSLQVAF…VKQADTICAY (113 aa)). The a divalent metal cation site is built by His33, His68, and Asp69. Substrate contacts are provided by residues Asp69, 77–80 (DLPT), and Asp137. An a divalent metal cation-binding site is contributed by Asp137.

Belongs to the 5DNU family. Homodimer. Requires a divalent metal cation as cofactor.

Its subcellular location is the cytoplasm. The catalysed reaction is a 2'-deoxyribonucleoside 5'-phosphate + H2O = a 2'-deoxyribonucleoside + phosphate. Catalyzes the strictly specific dephosphorylation of 2'-deoxyribonucleoside 5'-monophosphates. In Vibrio atlanticus (strain LGP32) (Vibrio splendidus (strain Mel32)), this protein is 5'-deoxynucleotidase VS_2195.